We begin with the raw amino-acid sequence, 363 residues long: Flagellar P-ring protein (363 aa).

An N-terminal signal peptide occupies residues 1–20 (MKYRLIVALAMLVLSLPSQA).

It belongs to the FlgI family. In terms of assembly, the basal body constitutes a major portion of the flagellar organelle and consists of four rings (L,P,S, and M) mounted on a central rod.

Its subcellular location is the periplasm. The protein localises to the bacterial flagellum basal body. Assembles around the rod to form the L-ring and probably protects the motor/basal body from shearing forces during rotation. This is Flagellar P-ring protein from Shewanella sp. (strain ANA-3).